The primary structure comprises 354 residues: Sulfate/thiosulfate import ATP-binding protein CysA (354 aa).

Residues 3–237 (IEVRGLSKRF…PATPFVYGFL (235 aa)) enclose the ABC transporter domain. An ATP-binding site is contributed by 35–42 (GPSGCGKT).

The protein belongs to the ABC transporter superfamily. Sulfate/tungstate importer (TC 3.A.1.6) family. The complex is composed of two ATP-binding proteins (CysA), two transmembrane proteins (CysT and CysW) and a solute-binding protein (CysP).

The protein resides in the cell inner membrane. It carries out the reaction sulfate(out) + ATP + H2O = sulfate(in) + ADP + phosphate + H(+). It catalyses the reaction thiosulfate(out) + ATP + H2O = thiosulfate(in) + ADP + phosphate + H(+). Functionally, part of the ABC transporter complex CysAWTP involved in sulfate/thiosulfate import. Responsible for energy coupling to the transport system. In Bordetella parapertussis (strain 12822 / ATCC BAA-587 / NCTC 13253), this protein is Sulfate/thiosulfate import ATP-binding protein CysA.